The primary structure comprises 141 residues: Large ribosomal subunit protein uL22 (141 aa).

This sequence belongs to the universal ribosomal protein uL22 family. In terms of assembly, part of the 50S ribosomal subunit.

Functionally, this protein binds specifically to 23S rRNA; its binding is stimulated by other ribosomal proteins, e.g. L4, L17, and L20. It is important during the early stages of 50S assembly. It makes multiple contacts with different domains of the 23S rRNA in the assembled 50S subunit and ribosome. In terms of biological role, the globular domain of the protein is located near the polypeptide exit tunnel on the outside of the subunit, while an extended beta-hairpin is found that lines the wall of the exit tunnel in the center of the 70S ribosome. In Frankia alni (strain DSM 45986 / CECT 9034 / ACN14a), this protein is Large ribosomal subunit protein uL22.